The sequence spans 134 residues: MPVTAQQVELIPLAIYTLFAVGLIGILLLAARYLGSGKETSEKHIPFESGMVPTGNARHASQVPFYLIAIFFIVFDVEGAFILAWATSWDLLGIPGLVHITLFITVLLLGLVWLWMKGGLDWGPSAMRARGKRS.

Transmembrane regions (helical) follow at residues 10–30 (LIPLAIYTLFAVGLIGILLLA), 65–85 (FYLIAIFFIVFDVEGAFILAW), and 94–114 (IPGLVHITLFITVLLLGLVWL).

This sequence belongs to the complex I subunit 3 family. In terms of assembly, NDH-1 is composed of 14 different subunits. Subunits NuoA, H, J, K, L, M, N constitute the membrane sector of the complex.

The protein resides in the cell inner membrane. It catalyses the reaction a quinone + NADH + 5 H(+)(in) = a quinol + NAD(+) + 4 H(+)(out). NDH-1 shuttles electrons from NADH, via FMN and iron-sulfur (Fe-S) centers, to quinones in the respiratory chain. The immediate electron acceptor for the enzyme in this species is believed to be ubiquinone. Couples the redox reaction to proton translocation (for every two electrons transferred, four hydrogen ions are translocated across the cytoplasmic membrane), and thus conserves the redox energy in a proton gradient. The chain is NADH-quinone oxidoreductase subunit A 1 from Citrifermentans bemidjiense (strain ATCC BAA-1014 / DSM 16622 / JCM 12645 / Bem) (Geobacter bemidjiensis).